The following is a 182-amino-acid chain: Translation initiation factor IF-3 (182 aa).

The disordered stretch occupies residues 1–22 (MPLGDCNISTPDNKQNRKNQEI).

This sequence belongs to the IF-3 family. As to quaternary structure, monomer.

It is found in the cytoplasm. IF-3 binds to the 30S ribosomal subunit and shifts the equilibrium between 70S ribosomes and their 50S and 30S subunits in favor of the free subunits, thus enhancing the availability of 30S subunits on which protein synthesis initiation begins. In Xanthomonas campestris pv. campestris (strain ATCC 33913 / DSM 3586 / NCPPB 528 / LMG 568 / P 25), this protein is Translation initiation factor IF-3.